The sequence spans 592 residues: V-type ATP synthase alpha chain (592 aa).

Gly-232–Thr-239 lines the ATP pocket.

The protein belongs to the ATPase alpha/beta chains family.

The catalysed reaction is ATP + H2O + 4 H(+)(in) = ADP + phosphate + 5 H(+)(out). Functionally, produces ATP from ADP in the presence of a proton gradient across the membrane. The V-type alpha chain is a catalytic subunit. This is V-type ATP synthase alpha chain from Clostridium botulinum (strain Eklund 17B / Type B).